A 448-amino-acid chain; its full sequence is RuvB-like 2 (448 aa).

73-80 (GEPGAGKT) contributes to the ATP binding site.

The protein belongs to the RuvB family. Forms homohexameric rings. May form a dodecamer with ruvb-1 made of two stacked hexameric rings. As to expression, expressed in gonadal cells.

The protein localises to the cytoplasm. The protein resides in the nucleus. The catalysed reaction is ATP + H2O = ADP + phosphate + H(+). Possesses single-stranded DNA-stimulated ATPase and ATP-dependent DNA helicase (5' to 3') activity suggesting a role in nuclear processes such as recombination and transcription. May participate in several chromatin remodeling complexes that mediate the ATP-dependent exchange of histones and remodel chromatin by shifting nucleosomes. Involvement in these complexes is likely required for transcriptional activation of selected genes and DNA repair in response to DNA damage. Has a role in gonadal development. Involved in the endoplasmic reticulum (ER)-associated degradation (ERAD) pathway where it negatively regulates expression of ER stress response genes. Specifically, negatively controls the expression of ER homeostasis regulator ckb-2 in a cdc-48.1/2-dependent manner. The sequence is that of RuvB-like 2 from Caenorhabditis elegans.